Here is a 317-residue protein sequence, read N- to C-terminus: Aspartate carbamoyltransferase catalytic subunit (317 aa).

The carbamoyl phosphate site is built by Arg66 and Thr67. Position 94 (Lys94) interacts with L-aspartate. Residues Arg116, His144, and Gln147 each contribute to the carbamoyl phosphate site. Residues Arg177 and Arg231 each coordinate L-aspartate. Gly272 and Pro273 together coordinate carbamoyl phosphate.

The protein belongs to the aspartate/ornithine carbamoyltransferase superfamily. ATCase family. As to quaternary structure, heterododecamer (2C3:3R2) of six catalytic PyrB chains organized as two trimers (C3), and six regulatory PyrI chains organized as three dimers (R2).

It catalyses the reaction carbamoyl phosphate + L-aspartate = N-carbamoyl-L-aspartate + phosphate + H(+). Its pathway is pyrimidine metabolism; UMP biosynthesis via de novo pathway; (S)-dihydroorotate from bicarbonate: step 2/3. Catalyzes the condensation of carbamoyl phosphate and aspartate to form carbamoyl aspartate and inorganic phosphate, the committed step in the de novo pyrimidine nucleotide biosynthesis pathway. In Beijerinckia indica subsp. indica (strain ATCC 9039 / DSM 1715 / NCIMB 8712), this protein is Aspartate carbamoyltransferase catalytic subunit.